Consider the following 168-residue polypeptide: Peptide deformylase (168 aa).

Residues Cys-92 and His-134 each coordinate Fe cation. The active site involves Glu-135. Fe cation is bound at residue His-138.

The protein belongs to the polypeptide deformylase family. It depends on Fe(2+) as a cofactor.

The enzyme catalyses N-terminal N-formyl-L-methionyl-[peptide] + H2O = N-terminal L-methionyl-[peptide] + formate. Removes the formyl group from the N-terminal Met of newly synthesized proteins. Requires at least a dipeptide for an efficient rate of reaction. N-terminal L-methionine is a prerequisite for activity but the enzyme has broad specificity at other positions. The polypeptide is Peptide deformylase (Pseudomonas aeruginosa (strain ATCC 15692 / DSM 22644 / CIP 104116 / JCM 14847 / LMG 12228 / 1C / PRS 101 / PAO1)).